The chain runs to 267 residues: Non-structural protein NS-S (267 aa).

This sequence belongs to the phlebovirus NS-S protein family.

The chain is Non-structural protein NS-S (NSS) from Homo sapiens (Human).